The following is a 200-amino-acid chain: Adenine phosphoribosyltransferase (200 aa).

The protein belongs to the purine/pyrimidine phosphoribosyltransferase family. As to quaternary structure, homodimer.

The protein resides in the cytoplasm. The enzyme catalyses AMP + diphosphate = 5-phospho-alpha-D-ribose 1-diphosphate + adenine. It participates in purine metabolism; AMP biosynthesis via salvage pathway; AMP from adenine: step 1/1. Its function is as follows. Catalyzes a salvage reaction resulting in the formation of AMP, that is energically less costly than de novo synthesis. The chain is Adenine phosphoribosyltransferase from Sorangium cellulosum (strain So ce56) (Polyangium cellulosum (strain So ce56)).